Consider the following 132-residue polypeptide: Small ribosomal subunit protein uS8 (132 aa).

Belongs to the universal ribosomal protein uS8 family. As to quaternary structure, part of the 30S ribosomal subunit. Contacts proteins S5 and S12.

In terms of biological role, one of the primary rRNA binding proteins, it binds directly to 16S rRNA central domain where it helps coordinate assembly of the platform of the 30S subunit. This chain is Small ribosomal subunit protein uS8, found in Pseudarthrobacter chlorophenolicus (strain ATCC 700700 / DSM 12829 / CIP 107037 / JCM 12360 / KCTC 9906 / NCIMB 13794 / A6) (Arthrobacter chlorophenolicus).